We begin with the raw amino-acid sequence, 185 residues long: MIGLFKVKEKQREESQSNNGRGASTVKKQSAGELRLHKDISELNLPKSCKISFPNGKNDLMNFEVTIKPDEGYYLSGNFVFSFQVSNMYPHEAPKVKCKTKVYHPNIDLEGNVCLNILREDWKPVLNINTVIYGLFHLFTEPNYEDPLNHEAAAVLRDNPKTFEYNVRRAMMGGQVGQTSFPRCM.

Residues 8-29 (KEKQREESQSNNGRGASTVKKQ) form a disordered region. Residues 16–28 (QSNNGRGASTVKK) show a composition bias toward polar residues. The 146-residue stretch at 31-176 (AGELRLHKDI…VRRAMMGGQV (146 aa)) folds into the UBC core domain. The active-site Glycyl thioester intermediate is the Cys114.

The protein belongs to the ubiquitin-conjugating enzyme family. UBC12 subfamily.

It functions in the pathway protein modification; protein neddylation. In terms of biological role, accepts the ubiquitin-like protein NEDD8/RUB1 from the ECR1-AXR1 E1 complex and catalyzes its covalent attachment to other proteins. The polypeptide is Probable NEDD8-conjugating enzyme Ubc12-like (RCE2) (Arabidopsis thaliana (Mouse-ear cress)).